A 181-amino-acid polypeptide reads, in one-letter code: MFKKFDEKENVSNCIQLKTSVIKGIKNQLLDQFPNIDDWLNQIMPKKDPVKIVRCHEHIEILTVNGELLFFRQREGPFYPTLRLLHKYPFILPHQQVDKGAIKFVLSGANIMCPGLTSPGAKLYPAESDTVVAIMAEGKQHALCVGVMKMSADDIEKVNMGIGIENVHYLNDGLWHMKTYK.

The region spanning 92-171 (LPHQQVDKGA…IGIENVHYLN (80 aa)) is the PUA domain.

This sequence belongs to the MCTS1 family.

Its subcellular location is the cytoplasm. Its function is as follows. Plays a role as translation enhancer and involved in cell cycle regulation. This chain is Malignant T-cell-amplified sequence 1 (mcts1), found in Danio rerio (Zebrafish).